A 293-amino-acid chain; its full sequence is Bifunctional protein FolD (293 aa).

Residues 164–166 (GRS), serine 193, and threonine 234 each bind NADP(+).

It belongs to the tetrahydrofolate dehydrogenase/cyclohydrolase family. Homodimer.

The enzyme catalyses (6R)-5,10-methylene-5,6,7,8-tetrahydrofolate + NADP(+) = (6R)-5,10-methenyltetrahydrofolate + NADPH. It carries out the reaction (6R)-5,10-methenyltetrahydrofolate + H2O = (6R)-10-formyltetrahydrofolate + H(+). The protein operates within one-carbon metabolism; tetrahydrofolate interconversion. Its function is as follows. Catalyzes the oxidation of 5,10-methylenetetrahydrofolate to 5,10-methenyltetrahydrofolate and then the hydrolysis of 5,10-methenyltetrahydrofolate to 10-formyltetrahydrofolate. In Azobacteroides pseudotrichonymphae genomovar. CFP2, this protein is Bifunctional protein FolD.